Consider the following 562-residue polypeptide: Septation ring formation regulator EzrA (562 aa).

The Extracellular portion of the chain corresponds to 1-2 (ME). Residues 3–21 (FVIGLLIVLLALFAAGYFF) traverse the membrane as a helical segment. The Cytoplasmic portion of the chain corresponds to 22-562 (RKKIYAEIDR…VEKIKADISA (541 aa)). Coiled-coil stretches lie at residues 377–425 (YSLL…LKKT) and 470–497 (MEEAGAHLKQAEDIVNRASRESEELVEQ).

It belongs to the EzrA family. In terms of processing, may be degraded by FtsH protease.

Its subcellular location is the cell membrane. It localises to the membrane raft. In terms of biological role, negative regulator of FtsZ ring formation; modulates the frequency and position of FtsZ ring formation. Inhibits FtsZ ring formation at polar sites. Interacts either with FtsZ or with one of its binding partners to promote depolymerization. This is Septation ring formation regulator EzrA from Bacillus subtilis (strain 168).